A 227-amino-acid polypeptide reads, in one-letter code: 7-cyano-7-deazaguanine synthase (227 aa).

An ATP-binding site is contributed by 8–18; sequence VSGGADSATVL. Positions 192, 202, 205, and 208 each coordinate Zn(2+).

Belongs to the QueC family. Zn(2+) serves as cofactor.

It carries out the reaction 7-carboxy-7-deazaguanine + NH4(+) + ATP = 7-cyano-7-deazaguanine + ADP + phosphate + H2O + H(+). Its pathway is purine metabolism; 7-cyano-7-deazaguanine biosynthesis. Catalyzes the ATP-dependent conversion of 7-carboxy-7-deazaguanine (CDG) to 7-cyano-7-deazaguanine (preQ(0)). This Rickettsia akari (strain Hartford) protein is 7-cyano-7-deazaguanine synthase.